We begin with the raw amino-acid sequence, 225 residues long: Small ribosomal subunit protein uS3 (225 aa).

Residues Ile38–Lys106 enclose the KH type-2 domain.

Belongs to the universal ribosomal protein uS3 family. Part of the 30S ribosomal subunit. Forms a tight complex with proteins S10 and S14.

In terms of biological role, binds the lower part of the 30S subunit head. Binds mRNA in the 70S ribosome, positioning it for translation. The polypeptide is Small ribosomal subunit protein uS3 (Leptospira interrogans serogroup Icterohaemorrhagiae serovar copenhageni (strain Fiocruz L1-130)).